The chain runs to 450 residues: 23S rRNA (uracil(1939)-C(5))-methyltransferase RlmD (450 aa).

Positions Met-1–Pro-22 are disordered. The region spanning Ala-20–Arg-78 is the TRAM domain. Residues Cys-91, Cys-97, Cys-100, and Cys-179 each coordinate [4Fe-4S] cluster. 6 residues coordinate S-adenosyl-L-methionine: Gln-283, Phe-312, Asn-317, Glu-333, Asp-360, and Asp-381. The Nucleophile role is filled by Cys-407.

This sequence belongs to the class I-like SAM-binding methyltransferase superfamily. RNA M5U methyltransferase family. RlmD subfamily.

The catalysed reaction is uridine(1939) in 23S rRNA + S-adenosyl-L-methionine = 5-methyluridine(1939) in 23S rRNA + S-adenosyl-L-homocysteine + H(+). Functionally, catalyzes the formation of 5-methyl-uridine at position 1939 (m5U1939) in 23S rRNA. In Pseudomonas aeruginosa (strain UCBPP-PA14), this protein is 23S rRNA (uracil(1939)-C(5))-methyltransferase RlmD.